Here is an 87-residue protein sequence, read N- to C-terminus: NADH dehydrogenase [ubiquinone] 1 alpha subcomplex subunit 4-like 2 (87 aa).

Belongs to the complex I NDUFA4 subunit family.

The chain is NADH dehydrogenase [ubiquinone] 1 alpha subcomplex subunit 4-like 2 (NDUFA4L2) from Bos taurus (Bovine).